We begin with the raw amino-acid sequence, 43 residues long: Plasma membrane ATPase proteolipid 2 (43 aa).

The propeptide occupies 1–5 (MLMST). Residues 9–29 (GVILVFILVGLACIAIISTII) form a helical membrane-spanning segment. At 30 to 43 (YRKWQARQRGLQRF) the chain is on the cytoplasmic side.

Monomer and homodimer. Associated with the 100 kDa subunit of the plasma membrane H(+)-ATPase.

It localises to the cell membrane. The sequence is that of Plasma membrane ATPase proteolipid 2 (PMP2) from Saccharomyces cerevisiae (strain ATCC 204508 / S288c) (Baker's yeast).